We begin with the raw amino-acid sequence, 233 residues long: Large ribosomal subunit protein uL1 (233 aa).

This sequence belongs to the universal ribosomal protein uL1 family. Part of the 50S ribosomal subunit.

Its function is as follows. Binds directly to 23S rRNA. The L1 stalk is quite mobile in the ribosome, and is involved in E site tRNA release. Protein L1 is also a translational repressor protein, it controls the translation of the L11 operon by binding to its mRNA. In Psychrobacter arcticus (strain DSM 17307 / VKM B-2377 / 273-4), this protein is Large ribosomal subunit protein uL1.